Here is a 475-residue protein sequence, read N- to C-terminus: Mitochondrial adenyl nucleotide antiporter SLC25A24 (475 aa).

Residues methionine 1 to aspartate 173 form a regulatory N-terminal domain region. At methionine 1–glutamine 197 the chain is on the mitochondrial intermembrane side. 4 EF-hand domains span residues glutamate 19–proline 54, leucine 55–glutamate 88, aspartate 86–histidine 121, and isoleucine 122–threonine 157. 20 residues coordinate Ca(2+): aspartate 32, asparagine 34, aspartate 36, valine 38, glutamate 43, aspartate 68, asparagine 70, aspartate 72, lysine 74, glutamate 79, aspartate 99, asparagine 101, aspartate 103, lysine 105, glutamate 110, aspartate 135, aspartate 137, threonine 139, threonine 141, and glutamate 146. The segment at isoleucine 159–histidine 168 is linker region. Positions isoleucine 174–lysine 475 are C-terminal transmembrane transporter domain. 3 Solcar repeats span residues glycine 192–leucine 276, leucine 284–tyrosine 369, and proline 381–threonine 469. The chain crosses the membrane as a helical span at residues leucine 198–leucine 215. Residues aspartate 216 to arginine 250 are Mitochondrial matrix-facing. A helical membrane pass occupies residues glycine 251–tyrosine 270. Topologically, residues glutamate 271–glycine 293 are mitochondrial intermembrane. A helical membrane pass occupies residues serine 294–methionine 307. Topologically, residues glutamate 308 to lysine 343 are mitochondrial matrix. Lysine 318 is modified (N6-acetyllysine; alternate). The residue at position 318 (lysine 318) is an N6-succinyllysine; alternate. Lysine 334 carries the post-translational modification N6-acetyllysine. A helical transmembrane segment spans residues glycine 344–tyrosine 363. Over glutamate 364–leucine 386 the chain is Mitochondrial intermembrane. The helical transmembrane segment at leucine 387–leucine 404 threads the bilayer. Over alanine 405–arginine 443 the chain is Mitochondrial matrix. Position 435 is an N6-acetyllysine; alternate (lysine 435). Lysine 435 carries the N6-succinyllysine; alternate modification. A helical transmembrane segment spans residues glycine 444 to tyrosine 463. The Mitochondrial intermembrane portion of the chain corresponds to glutamate 464–lysine 475.

The protein belongs to the mitochondrial carrier (TC 2.A.29) family. As to quaternary structure, monomer.

The protein localises to the mitochondrion inner membrane. The catalysed reaction is Mg(2+)(out) + phosphate(in) + ATP(out) = Mg(2+)(in) + phosphate(out) + ATP(in). It catalyses the reaction ADP(out) + phosphate(in) + H(+)(out) = ADP(in) + phosphate(out) + H(+)(in). The enzyme catalyses AMP(out) + phosphate(in) = AMP(in) + phosphate(out). It carries out the reaction phosphate(in) + ATP(out) + 2 H(+)(out) = phosphate(out) + ATP(in) + 2 H(+)(in). The catalysed reaction is dADP(in) + ADP(out) = dADP(out) + ADP(in). It catalyses the reaction Mg(2+)(in) + ADP(out) + ATP(in) + H(+)(out) = Mg(2+)(out) + ADP(in) + ATP(out) + H(+)(in). The enzyme catalyses ADP(out) + diphosphate(in) = ADP(in) + diphosphate(out). It carries out the reaction dAMP(in) + ADP(out) + H(+)(out) = dAMP(out) + ADP(in) + H(+)(in). The catalysed reaction is 3'-AMP(in) + ADP(out) + H(+)(out) = 3'-AMP(out) + ADP(in) + H(+)(in). It catalyses the reaction dAMP(out) + phosphate(in) = dAMP(in) + phosphate(out). The enzyme catalyses 3'-AMP(out) + phosphate(in) = 3'-AMP(in) + phosphate(out). It carries out the reaction dADP(out) + phosphate(in) + H(+)(out) = dADP(in) + phosphate(out) + H(+)(in). Its activity is regulated as follows. Activated by an increase in cytosolic calcium levels that induce a conformational change of the N-terminal regulatory domain, uncapping the channel and allowing transport. Inhibited by bathophenanthroline, mersalyl, p-hydroxymercuribenzoate, bromcresol purple and tannic acid. Functionally, electroneutral antiporter that mediates the transport of adenyl nucleotides through the inner mitochondrial membrane. Originally identified as an ATP-magnesium/inorganic phosphate antiporter, it also acts as a broad specificity adenyl nucleotide antiporter. By regulating the mitochondrial matrix adenyl nucleotide pool could adapt to changing cellular energetic demands and indirectly regulate adenyl nucleotide-dependent metabolic pathways. In vitro, a low activity is also observed with guanyl and pyrimidine nucleotides. May play a role in protecting cells against oxidative stress-induced cell death, by buffering calcium levels in the mitochondrial matrix through the formation of calcium-phosphate precipitates. The polypeptide is Mitochondrial adenyl nucleotide antiporter SLC25A24 (Mus musculus (Mouse)).